The primary structure comprises 485 residues: Glycogen synthase (485 aa).

Lysine 15 provides a ligand contact to ADP-alpha-D-glucose.

The protein belongs to the glycosyltransferase 1 family. Bacterial/plant glycogen synthase subfamily.

It catalyses the reaction [(1-&gt;4)-alpha-D-glucosyl](n) + ADP-alpha-D-glucose = [(1-&gt;4)-alpha-D-glucosyl](n+1) + ADP + H(+). It participates in glycan biosynthesis; glycogen biosynthesis. In terms of biological role, synthesizes alpha-1,4-glucan chains using ADP-glucose. This is Glycogen synthase from Geobacillus thermodenitrificans (strain NG80-2).